Consider the following 158-residue polypeptide: NAD(P)H-quinone oxidoreductase subunit N (158 aa).

This sequence belongs to the complex I NdhN subunit family. In terms of assembly, NDH-1 can be composed of about 15 different subunits; different subcomplexes with different compositions have been identified which probably have different functions.

Its subcellular location is the cellular thylakoid membrane. The catalysed reaction is a plastoquinone + NADH + (n+1) H(+)(in) = a plastoquinol + NAD(+) + n H(+)(out). It catalyses the reaction a plastoquinone + NADPH + (n+1) H(+)(in) = a plastoquinol + NADP(+) + n H(+)(out). NDH-1 shuttles electrons from an unknown electron donor, via FMN and iron-sulfur (Fe-S) centers, to quinones in the respiratory and/or the photosynthetic chain. The immediate electron acceptor for the enzyme in this species is believed to be plastoquinone. Couples the redox reaction to proton translocation, and thus conserves the redox energy in a proton gradient. Cyanobacterial NDH-1 also plays a role in inorganic carbon-concentration. In Prochlorococcus marinus (strain MIT 9312), this protein is NAD(P)H-quinone oxidoreductase subunit N.